The chain runs to 145 residues: S-adenosylmethionine synthase 2 (145 aa).

ATP-binding positions include 6–7, alanine 23, lysine 27, and lysine 31; that span reads RK. Residue lysine 31 coordinates L-methionine.

Belongs to the AdoMet synthase family. In terms of assembly, homotetramer. It depends on Mn(2+) as a cofactor. Requires Mg(2+) as cofactor. Co(2+) is required as a cofactor. K(+) serves as cofactor. As to expression, mainly in floral buds and roots.

The protein localises to the cytoplasm. It carries out the reaction L-methionine + ATP + H2O = S-adenosyl-L-methionine + phosphate + diphosphate. The protein operates within amino-acid biosynthesis; S-adenosyl-L-methionine biosynthesis; S-adenosyl-L-methionine from L-methionine: step 1/1. Its function is as follows. Catalyzes the formation of S-adenosylmethionine from methionine and ATP. The reaction comprises two steps that are both catalyzed by the same enzyme: formation of S-adenosylmethionine (AdoMet) and triphosphate, and subsequent hydrolysis of the triphosphate. The sequence is that of S-adenosylmethionine synthase 2 (SMS-2) from Petroselinum crispum (Parsley).